A 164-amino-acid chain; its full sequence is Phosphopantetheine adenylyltransferase (164 aa).

Residue T10 participates in substrate binding. Residues 10-11 (TF) and H18 each bind ATP. Substrate-binding residues include K42, T79, and R93. Residues 94–96 (GLR), E104, and 129–135 (NQIISSR) contribute to the ATP site.

Belongs to the bacterial CoaD family. As to quaternary structure, homohexamer. Mg(2+) is required as a cofactor.

The protein resides in the cytoplasm. The catalysed reaction is (R)-4'-phosphopantetheine + ATP + H(+) = 3'-dephospho-CoA + diphosphate. It participates in cofactor biosynthesis; coenzyme A biosynthesis; CoA from (R)-pantothenate: step 4/5. Functionally, reversibly transfers an adenylyl group from ATP to 4'-phosphopantetheine, yielding dephospho-CoA (dPCoA) and pyrophosphate. The polypeptide is Phosphopantetheine adenylyltransferase (Pelagibacter ubique (strain HTCC1062)).